The primary structure comprises 288 residues: Phosphatidylserine decarboxylase proenzyme (288 aa).

Active-site charge relay system; for autoendoproteolytic cleavage activity residues include Asp-90, His-147, and Ser-254. Ser-254 acts as the Schiff-base intermediate with substrate; via pyruvic acid; for decarboxylase activity in catalysis. The residue at position 254 (Ser-254) is a Pyruvic acid (Ser); by autocatalysis.

The protein belongs to the phosphatidylserine decarboxylase family. PSD-B subfamily. Prokaryotic type I sub-subfamily. Heterodimer of a large membrane-associated beta subunit and a small pyruvoyl-containing alpha subunit. The cofactor is pyruvate. In terms of processing, is synthesized initially as an inactive proenzyme. Formation of the active enzyme involves a self-maturation process in which the active site pyruvoyl group is generated from an internal serine residue via an autocatalytic post-translational modification. Two non-identical subunits are generated from the proenzyme in this reaction, and the pyruvate is formed at the N-terminus of the alpha chain, which is derived from the carboxyl end of the proenzyme. The autoendoproteolytic cleavage occurs by a canonical serine protease mechanism, in which the side chain hydroxyl group of the serine supplies its oxygen atom to form the C-terminus of the beta chain, while the remainder of the serine residue undergoes an oxidative deamination to produce ammonia and the pyruvoyl prosthetic group on the alpha chain. During this reaction, the Ser that is part of the protease active site of the proenzyme becomes the pyruvoyl prosthetic group, which constitutes an essential element of the active site of the mature decarboxylase.

The protein resides in the cell membrane. The catalysed reaction is a 1,2-diacyl-sn-glycero-3-phospho-L-serine + H(+) = a 1,2-diacyl-sn-glycero-3-phosphoethanolamine + CO2. The protein operates within phospholipid metabolism; phosphatidylethanolamine biosynthesis; phosphatidylethanolamine from CDP-diacylglycerol: step 2/2. Catalyzes the formation of phosphatidylethanolamine (PtdEtn) from phosphatidylserine (PtdSer). This Hamiltonella defensa subsp. Acyrthosiphon pisum (strain 5AT) protein is Phosphatidylserine decarboxylase proenzyme.